Consider the following 301-residue polypeptide: MLMNFGGSYDAYINNFQGTFLAEWMLDHPSVPYIAGVMYLILVLYVPKSIMASQPPLNLRAANIVWNLFLTLFSMCGAYYTVPYLVKAFMNPEIVMAASGIKLDANTSPIITHSGFYTTTCALADSFYFNGDVGFWVALFALSKIPEMIDTAFLVFQKKPVIFLHWYHHLTVMLFCWFAYVQKISSGLWFASMNYSVHSIMYLYYFVCACGHRRLVRPFAPIITFVQIFQMVVGTIVVCYTYTVKHVLGRSCTVTDFSLHTGLVMYVSYLLLFSQLFYRSYLSPRDKASIPHVAAEIKKKE.

7 helical membrane passes run 31-51 (VPYIAGVMYLILVLYVPKSIM), 64-84 (IVWNLFLTLFSMCGAYYTVPY), 122-142 (ALADSFYFNGDVGFWVALFAL), 161-181 (VIFLHWYHHLTVMLFCWFAYV), 187-207 (GLWFASMNYSVHSIMYLYYFV), 219-239 (FAPIITFVQIFQMVVGTIVVC), and 257-277 (FSLHTGLVMYVSYLLLFSQLF). Residues 165–169 (HWYHH) carry the HxxHH motif motif. The active-site Nucleophile is the His-168.

Belongs to the ELO family.

The protein resides in the endoplasmic reticulum membrane. It carries out the reaction an acyl-CoA + malonyl-CoA + H(+) = a 3-oxoacyl-CoA + CO2 + CoA. The protein operates within lipid metabolism; fatty acid biosynthesis. Its function is as follows. Involved in the synthesis of fatty acids. Elongates C14 fatty acids to C18. This is Fatty acid elongase 3 from Trypanosoma brucei brucei (strain 927/4 GUTat10.1).